The primary structure comprises 78 residues: MDFNQEVLSVLAEVCQDDIVKENPDIDIFEEGILDSFGTVELLLAFESHFNITVPITEFDRDAWNTPNQIIKQLNELR.

Residues 1–78 (MDFNQEVLSV…QIIKQLNELR (78 aa)) form the Carrier domain. O-(pantetheine 4'-phosphoryl)serine is present on serine 36.

It belongs to the DltC family. In terms of processing, 4'-phosphopantetheine is transferred from CoA to a specific serine of apo-DCP.

It localises to the cytoplasm. Its pathway is cell wall biogenesis; lipoteichoic acid biosynthesis. Functionally, carrier protein involved in the D-alanylation of lipoteichoic acid (LTA). The loading of thioester-linked D-alanine onto DltC is catalyzed by D-alanine--D-alanyl carrier protein ligase DltA. The DltC-carried D-alanyl group is further transferred to cell membrane phosphatidylglycerol (PG) by forming an ester bond, probably catalyzed by DltD. D-alanylation of LTA plays an important role in modulating the properties of the cell wall in Gram-positive bacteria, influencing the net charge of the cell wall. This chain is D-alanyl carrier protein, found in Bacillus licheniformis (strain ATCC 14580 / DSM 13 / JCM 2505 / CCUG 7422 / NBRC 12200 / NCIMB 9375 / NCTC 10341 / NRRL NRS-1264 / Gibson 46).